We begin with the raw amino-acid sequence, 397 residues long: Gamma tubulin complex adapter mto2 (397 aa).

Residues 1–13 (MSEHNYQSDREVA) are compositionally biased toward basic and acidic residues. 3 disordered regions span residues 1-44 (MSEH…WRAG), 269-298 (YTSSVDSSPQRMASDSYGRPSLHLNDPFPS), and 346-397 (RSDP…TPSP). Polar residues-rich tracts occupy residues 22–37 (ASANQLSSNSRESTPR), 269–281 (YTSSVDSSPQRMA), 352–369 (RHVSNSTNKSSLHPSPTS), and 382–397 (SPASQSFPSLQDTPSP). Residues serine 366 and serine 396 each carry the phosphoserine modification.

In terms of assembly, interacts with mto1; the interaction is direct and required for efficient binding to the gamma-tubulin complex. Interacts with gamma tubulin complex subunits alp4, alp6 and gtb1.

It is found in the cytoplasm. It localises to the cytoskeleton. Its subcellular location is the microtubule organizing center. The protein resides in the spindle pole body. Functionally, acts together with mto1 to promote nucleation of at least a subset of cytoplasmic microtubules, by recruiting the gamma-tubulin complex to the interphase microtubule organizing center (iMTOC) and to the equatorial MTOC (eMTOC) during anaphase. Does not appear to be required for cytoplasmic astral microtubule nucleation from the spindle pole body (SPB). Required to establish the eMTOC, and thereby to tether the cytokinetic actin ring. The sequence is that of Gamma tubulin complex adapter mto2 from Schizosaccharomyces pombe (strain 972 / ATCC 24843) (Fission yeast).